The primary structure comprises 63 residues: uncharacterized protein (63 aa).

Residues 15 to 37 form a helical membrane-spanning segment; that stretch reads ISHCHLPLSPATAIAIIICFRIV.

It localises to the membrane. This is an uncharacterized protein from Saccharomyces cerevisiae (strain ATCC 204508 / S288c) (Baker's yeast).